The following is a 414-amino-acid chain: Trafficking protein particle complex subunit 13 (414 aa).

Belongs to the TRAPPC13 family. As to quaternary structure, part of the multisubunit TRAPP (transport protein particle) complex.

This chain is Trafficking protein particle complex subunit 13 (trappc13), found in Xenopus laevis (African clawed frog).